Here is a 109-residue protein sequence, read N- to C-terminus: Large ribosomal subunit protein uL22 (109 aa).

The protein belongs to the universal ribosomal protein uL22 family. In terms of assembly, part of the 50S ribosomal subunit.

This protein binds specifically to 23S rRNA; its binding is stimulated by other ribosomal proteins, e.g. L4, L17, and L20. It is important during the early stages of 50S assembly. It makes multiple contacts with different domains of the 23S rRNA in the assembled 50S subunit and ribosome. Its function is as follows. The globular domain of the protein is located near the polypeptide exit tunnel on the outside of the subunit, while an extended beta-hairpin is found that lines the wall of the exit tunnel in the center of the 70S ribosome. The sequence is that of Large ribosomal subunit protein uL22 from Cupriavidus taiwanensis (strain DSM 17343 / BCRC 17206 / CCUG 44338 / CIP 107171 / LMG 19424 / R1) (Ralstonia taiwanensis (strain LMG 19424)).